The chain runs to 450 residues: Methionine aminopeptidase 2 (450 aa).

The interval Met-1–Gly-99 is disordered. Positions Gly-33 to Gly-49 are enriched in acidic residues. A compositionally biased stretch (basic residues) spans Lys-60 to Val-75. His-200 contacts substrate. Residues Asp-220, Asp-231, and His-300 each coordinate a divalent metal cation. His-308 provides a ligand contact to substrate. A divalent metal cation contacts are provided by Glu-336 and Glu-431.

Belongs to the peptidase M24A family. Methionine aminopeptidase eukaryotic type 2 subfamily. Co(2+) is required as a cofactor. Requires Zn(2+) as cofactor. Mn(2+) serves as cofactor. The cofactor is Fe(2+).

It localises to the cytoplasm. The enzyme catalyses Release of N-terminal amino acids, preferentially methionine, from peptides and arylamides.. Functionally, cotranslationally removes the N-terminal methionine from nascent proteins. The N-terminal methionine is often cleaved when the second residue in the primary sequence is small and uncharged (Met-Ala-, Cys, Gly, Pro, Ser, Thr, or Val). The protein is Methionine aminopeptidase 2 of Uncinocarpus reesii (strain UAMH 1704).